Here is a 426-residue protein sequence, read N- to C-terminus: Coiled-coil domain-containing protein 86 (426 aa).

Residues 1 to 426 are disordered; sequence MDTPLRRSRR…QPPQRPVAKV (426 aa). Phosphoserine is present on S18. The segment covering 33–49 has biased composition (basic and acidic residues); that stretch reads ALVDFKSNSEETGELKS. The span at 55–145 shows a compositional bias: pro residues; that stretch reads LSLPSPGPQP…SLPSPGPQPE (91 aa). S59 carries the post-translational modification Phosphoserine. T66 carries the post-translational modification Phosphothreonine. A phosphoserine mark is found at S67, S70, S161, S172, S183, S191, S194, S225, S252, S253, and S283. The segment covering 241–255 has biased composition (polar residues); that stretch reads QPAQELTVQAPSSPE. The span at 304 to 320 shows a compositional bias: basic residues; sequence GKPKSGRVWKDRSKKRF. Residues 339–383 show a composition bias toward basic and acidic residues; sequence ERQERKLAKDFARHLEEEKQRRRQEKKERRAENLRRRLENERKAE. Positions 346–389 form a coiled coil; sequence AKDFARHLEEEKQRRRQEKKERRAENLRRRLENERKAEIVQVIR. Positions 392–402 are enriched in basic residues; the sequence is AKLKKAKKKQL. R408 carries the post-translational modification Citrulline.

Post-translationally, citrullinated by PADI4. As to expression, highly expressed in testis. Also expressed in heart, liver, kidney.

It is found in the nucleus. The protein resides in the chromosome. It localises to the nucleolus. In terms of biological role, required for proper chromosome segregation during mitosis and error-free mitotic progression. In Mus musculus (Mouse), this protein is Coiled-coil domain-containing protein 86.